Reading from the N-terminus, the 362-residue chain is Serine/threonine-protein kinase SBK2 (362 aa).

Over residues 1-11 the composition is skewed to basic and acidic residues; sequence MPGKQSEDRPM. The segment at 1–20 is disordered; it reads MPGKQSEDRPMEVAAVEDGG. In terms of domain architecture, Protein kinase spans 62 to 330; it reads YEEVRPLGQG…IKSYLGQPWK (269 aa). ATP-binding positions include 68 to 76 and K91; that span reads LGQGRFGRV. The active-site Proton acceptor is the D183. The interval 317–362 is disordered; it reads PVSSIKSYLGQPWKQREEGAEELTKELREDGSRGGQEAAKGEQPAC. Basic and acidic residues predominate over residues 330–348; the sequence is KQREEGAEELTKELREDGS.

The protein belongs to the protein kinase superfamily. Ser/Thr protein kinase family. STKL subfamily.

The enzyme catalyses L-seryl-[protein] + ATP = O-phospho-L-seryl-[protein] + ADP + H(+). The catalysed reaction is L-threonyl-[protein] + ATP = O-phospho-L-threonyl-[protein] + ADP + H(+). This Rattus norvegicus (Rat) protein is Serine/threonine-protein kinase SBK2 (Sbk2).